The chain runs to 662 residues: FAST kinase domain-containing protein 3, mitochondrial (662 aa).

The RAP domain maps to 591-649 (IALCIDGPKRFCSNSKHLLGKEAIKQRHLQLLGYQVVQIPYHEIGMLKSRRELVEYLQR).

This sequence belongs to the FAST kinase family. As to expression, expression detected in spleen, thymus, testis, ovary, colon, heart, smooth muscle, kidney, brain, lung, liver and white adipose tissue with highest expression in liver and thyroid.

Its subcellular location is the mitochondrion. Required for normal mitochondrial respiration. Increases steady-state levels and half-lives of a subset of mature mitochondrial mRNAs MT-ND2, MT-ND3, MT-CYTB, MT-CO2, and MT-ATP8/6. Promotes MT-CO1 mRNA translation and increases mitochondrial complex IV assembly and activity. This Homo sapiens (Human) protein is FAST kinase domain-containing protein 3, mitochondrial (FASTKD3).